Here is a 261-residue protein sequence, read N- to C-terminus: Imidazole glycerol phosphate synthase subunit HisF (261 aa).

Active-site residues include Asp-16 and Asp-135.

Belongs to the HisA/HisF family. Heterodimer of HisH and HisF.

The protein resides in the cytoplasm. It carries out the reaction 5-[(5-phospho-1-deoxy-D-ribulos-1-ylimino)methylamino]-1-(5-phospho-beta-D-ribosyl)imidazole-4-carboxamide + L-glutamine = D-erythro-1-(imidazol-4-yl)glycerol 3-phosphate + 5-amino-1-(5-phospho-beta-D-ribosyl)imidazole-4-carboxamide + L-glutamate + H(+). It functions in the pathway amino-acid biosynthesis; L-histidine biosynthesis; L-histidine from 5-phospho-alpha-D-ribose 1-diphosphate: step 5/9. Its function is as follows. IGPS catalyzes the conversion of PRFAR and glutamine to IGP, AICAR and glutamate. The HisF subunit catalyzes the cyclization activity that produces IGP and AICAR from PRFAR using the ammonia provided by the HisH subunit. The chain is Imidazole glycerol phosphate synthase subunit HisF from Mycobacterium ulcerans (strain Agy99).